We begin with the raw amino-acid sequence, 403 residues long: S-adenosylmethionine synthase (403 aa).

Position 17 (His17) interacts with ATP. Asp19 contacts Mg(2+). Residue Glu45 coordinates K(+). Residues Glu58 and Gln104 each contribute to the L-methionine site. The interval 104 to 114 is flexible loop; it reads QSPDIAQGVDT. Residues 179-181, 250-251, Asp259, 265-266, Ala282, and Lys286 contribute to the ATP site; these read DGK, KF, and RK. Asp259 contributes to the L-methionine binding site. Residue Lys290 participates in L-methionine binding.

This sequence belongs to the AdoMet synthase family. In terms of assembly, homotetramer; dimer of dimers. Mg(2+) is required as a cofactor. K(+) serves as cofactor.

The protein localises to the cytoplasm. The catalysed reaction is L-methionine + ATP + H2O = S-adenosyl-L-methionine + phosphate + diphosphate. The protein operates within amino-acid biosynthesis; S-adenosyl-L-methionine biosynthesis; S-adenosyl-L-methionine from L-methionine: step 1/1. Its function is as follows. Catalyzes the formation of S-adenosylmethionine (AdoMet) from methionine and ATP. The overall synthetic reaction is composed of two sequential steps, AdoMet formation and the subsequent tripolyphosphate hydrolysis which occurs prior to release of AdoMet from the enzyme. The polypeptide is S-adenosylmethionine synthase (Mycobacterium bovis (strain BCG / Pasteur 1173P2)).